The primary structure comprises 676 residues: Ribonuclease R (676 aa).

The 321-residue stretch at 207–527 (RKDLRDLLCF…LIVHRLLFNP (321 aa)) folds into the RNB domain. The region spanning 566–651 (NKFLQEQPKT…LTQKIVWSIA (86 aa)) is the S1 motif domain. Residues 656–676 (DKPKKIKKTPSKKKGTKKRAS) are disordered. Over residues 659 to 676 (KKIKKTPSKKKGTKKRAS) the composition is skewed to basic residues.

This sequence belongs to the RNR ribonuclease family. RNase R subfamily.

The protein resides in the cytoplasm. The catalysed reaction is Exonucleolytic cleavage in the 3'- to 5'-direction to yield nucleoside 5'-phosphates.. In terms of biological role, 3'-5' exoribonuclease that releases 5'-nucleoside monophosphates and is involved in maturation of structured RNAs. This chain is Ribonuclease R, found in Chlamydia pneumoniae (Chlamydophila pneumoniae).